The primary structure comprises 140 residues: Holo-[acyl-carrier-protein] synthase (140 aa).

Residues Asp8 and Glu57 each coordinate Mg(2+).

The protein belongs to the P-Pant transferase superfamily. AcpS family. Requires Mg(2+) as cofactor.

The protein resides in the cytoplasm. The catalysed reaction is apo-[ACP] + CoA = holo-[ACP] + adenosine 3',5'-bisphosphate + H(+). Transfers the 4'-phosphopantetheine moiety from coenzyme A to a Ser of acyl-carrier-protein. In Beijerinckia indica subsp. indica (strain ATCC 9039 / DSM 1715 / NCIMB 8712), this protein is Holo-[acyl-carrier-protein] synthase.